A 297-amino-acid chain; its full sequence is tRNA pseudouridine synthase B (297 aa).

Asp44 (nucleophile) is an active-site residue.

This sequence belongs to the pseudouridine synthase TruB family. Type 1 subfamily.

The enzyme catalyses uridine(55) in tRNA = pseudouridine(55) in tRNA. Responsible for synthesis of pseudouridine from uracil-55 in the psi GC loop of transfer RNAs. In Corynebacterium glutamicum (strain R), this protein is tRNA pseudouridine synthase B.